Consider the following 493-residue polypeptide: Glycerol kinase (493 aa).

Position 11 (T11) interacts with ADP. 3 residues coordinate ATP: T11, T12, and S13. T11 lines the sn-glycerol 3-phosphate pocket. R15 serves as a coordination point for ADP. R80, E81, Y132, and D241 together coordinate sn-glycerol 3-phosphate. The glycerol site is built by R80, E81, Y132, D241, and Q242. T263 and G306 together coordinate ADP. Residues T263, G306, Q310, and G408 each coordinate ATP. G408 lines the ADP pocket.

Belongs to the FGGY kinase family.

It catalyses the reaction glycerol + ATP = sn-glycerol 3-phosphate + ADP + H(+). Its pathway is polyol metabolism; glycerol degradation via glycerol kinase pathway; sn-glycerol 3-phosphate from glycerol: step 1/1. Its activity is regulated as follows. Inhibited by fructose 1,6-bisphosphate (FBP). Key enzyme in the regulation of glycerol uptake and metabolism. Catalyzes the phosphorylation of glycerol to yield sn-glycerol 3-phosphate. The sequence is that of Glycerol kinase from Cereibacter sphaeroides (strain ATCC 17029 / ATH 2.4.9) (Rhodobacter sphaeroides).